Consider the following 361-residue polypeptide: Putative F-box protein At3g25460 (361 aa).

Residues 1–45 form the F-box domain; sequence MMMPELPEDLLVEILCRVPATSLKRLRSTCKLWNHLYNDKRFKSK.

In Arabidopsis thaliana (Mouse-ear cress), this protein is Putative F-box protein At3g25460.